The chain runs to 488 residues: N-acyl-D-glutamate deacylase (488 aa).

Belongs to the metallo-dependent hydrolases superfamily. N-acyl-D-amino-acid deacylase family. The cofactor is Zn(2+).

The protein localises to the cytoplasm. It catalyses the reaction an N-acyl-D-glutamate + H2O = D-glutamate + a carboxylate. With respect to regulation, inhibited by cobalt, copper and EDTA. The sequence is that of N-acyl-D-glutamate deacylase from Alcaligenes xylosoxydans xylosoxydans (Achromobacter xylosoxidans).